We begin with the raw amino-acid sequence, 432 residues long: Protein trichome birefringence-like 23 (432 aa).

Residues 13–35 (QNTYLIKLVAATLITCLAFRFFV) traverse the membrane as a helical; Signal-anchor for type II membrane protein segment. A GDS motif motif is present at residues 153-155 (GDS). A DCXHWCLPGXXDXWN motif motif is present at residues 404–418 (DCLHWCLPGPIDHLN).

The protein belongs to the PC-esterase family. TBL subfamily.

It is found in the membrane. Functionally, may act as a bridging protein that binds pectin and other cell wall polysaccharides. Probably involved in maintaining esterification of pectins. May be involved in the specific O-acetylation of cell wall polymers. The chain is Protein trichome birefringence-like 23 (TBL23) from Arabidopsis thaliana (Mouse-ear cress).